The primary structure comprises 403 residues: Forkhead box protein Q1 (403 aa).

Disordered regions lie at residues 1-75 (MKLE…PGAE) and 94-116 (GAAGPGAGGAGSGEGARSKPYTR). Residues 32 to 48 (LSAAGDDSLGSDGDCAA) show a composition bias toward low complexity. The segment covering 96–107 (AGPGAGGAGSGE) has biased composition (gly residues). Residues 119–214 (KPPYSYIALI…ADGVFRRRRK (96 aa)) constitute a DNA-binding region (fork-head). Positions 216-266 (LSHRAPVPAPGLRPEEAPGLPAAPPPAPAAPASPRMRSPARQEERASPAGK) are disordered. Pro residues predominate over residues 236–246 (PAAPPPAPAAP).

As to expression, expressed predominantly in the stomach, trachea, bladder and salivary gland.

The protein localises to the nucleus. Functionally, plays a role in hair follicle differentiation. This Homo sapiens (Human) protein is Forkhead box protein Q1 (FOXQ1).